Consider the following 382-residue polypeptide: Alkanesulfonate monooxygenase (382 aa).

The protein belongs to the SsuD family. In terms of assembly, homotetramer.

The enzyme catalyses an alkanesulfonate + FMNH2 + O2 = an aldehyde + FMN + sulfite + H2O + 2 H(+). Its function is as follows. Catalyzes the desulfonation of aliphatic sulfonates. The sequence is that of Alkanesulfonate monooxygenase from Yersinia pestis bv. Antiqua (strain Antiqua).